The following is a 1032-amino-acid chain: tRNA wybutosine-synthesizing protein 4 (1032 aa).

S-adenosyl-L-methionine contacts are provided by residues R69, G95, D122, 169–170 (DL), and E196. The tract at residues 702–726 (ESVEPNKSQSEKATSKPSAQSQNEP) is disordered. Over residues 716-725 (SKPSAQSQNE) the composition is skewed to polar residues. A JmjC domain is found at 833-988 (PTKLPANLAV…AAGRDVYGNR (156 aa)).

The protein belongs to the methyltransferase superfamily. LCMT family.

It catalyses the reaction 7-[(3S)-3-amino-3-carboxypropyl]wyosine(37) in tRNA(Phe) + S-adenosyl-L-methionine = 7-[(3S)-(3-amino-3-methoxycarbonyl)propyl]wyosine(37) in tRNA(Phe) + S-adenosyl-L-homocysteine. It carries out the reaction 7-[(3S)-(3-amino-3-methoxycarbonyl)propyl]wyosine(37) in tRNA(Phe) + S-adenosyl-L-methionine + CO2 = wybutosine(37) in tRNA(Phe) + S-adenosyl-L-homocysteine + 2 H(+). It functions in the pathway tRNA modification; wybutosine-tRNA(Phe) biosynthesis. Probable S-adenosyl-L-methionine-dependent methyltransferase that acts as a component of the wybutosine biosynthesis pathway. Wybutosine is a hyper modified guanosine with a tricyclic base found at the 3'-position adjacent to the anticodon of eukaryotic phenylalanine tRNA. May methylate the carboxyl group of leucine residues to form alpha-leucine ester residues. The polypeptide is tRNA wybutosine-synthesizing protein 4 (ppm2) (Aspergillus oryzae (strain ATCC 42149 / RIB 40) (Yellow koji mold)).